Consider the following 117-residue polypeptide: Large ribosomal subunit protein eL8 (117 aa).

The protein belongs to the eukaryotic ribosomal protein eL8 family. As to quaternary structure, part of the 50S ribosomal subunit. Part of the RNase P complex.

It is found in the cytoplasm. The enzyme catalyses Endonucleolytic cleavage of RNA, removing 5'-extranucleotides from tRNA precursor.. In terms of biological role, multifunctional RNA-binding protein that recognizes the K-turn motif in ribosomal RNA, the RNA component of RNase P, box H/ACA, box C/D and box C'/D' sRNAs. Part of ribonuclease P, a protein complex that generates mature tRNA molecules by cleaving their 5'-ends, this subunit dramatically stimulates RNase P activity. This Methanococcus maripaludis (strain DSM 14266 / JCM 13030 / NBRC 101832 / S2 / LL) protein is Large ribosomal subunit protein eL8.